Here is a 471-residue protein sequence, read N- to C-terminus: Argininosuccinate lyase (471 aa).

This sequence belongs to the lyase 1 family. Argininosuccinate lyase subfamily.

The protein resides in the cytoplasm. The enzyme catalyses 2-(N(omega)-L-arginino)succinate = fumarate + L-arginine. It functions in the pathway amino-acid biosynthesis; L-arginine biosynthesis; L-arginine from L-ornithine and carbamoyl phosphate: step 3/3. This Ralstonia pickettii (strain 12J) protein is Argininosuccinate lyase.